A 27-amino-acid polypeptide reads, in one-letter code: Conotoxin Bt9.2 (27 aa).

3 disulfides stabilise this stretch: Cys-2/Cys-16, Cys-6/Cys-19, and Cys-12/Cys-24. Pro-13 is subject to 4-hydroxyproline.

In terms of tissue distribution, expressed by the venom duct.

It is found in the secreted. Its function is as follows. Probable neurotoxin that inhibits ion channels. The polypeptide is Conotoxin Bt9.2 (Conus betulinus (Beech cone)).